The following is a 210-amino-acid chain: Inner membrane-spanning protein YciB (210 aa).

6 helical membrane passes run 12-32 (EVSP…FFFA), 53-73 (IFIA…ASWI), 78-98 (LPMM…LTLW), 115-135 (LFGA…GYVF), 148-168 (KLTI…EVIW), and 175-195 (FWVA…TLAQ).

It belongs to the YciB family.

The protein resides in the cell inner membrane. Functionally, plays a role in cell envelope biogenesis, maintenance of cell envelope integrity and membrane homeostasis. In Rhizobium meliloti (strain 1021) (Ensifer meliloti), this protein is Inner membrane-spanning protein YciB.